The following is a 129-amino-acid chain: Glycine cleavage system H protein (129 aa).

In terms of domain architecture, Lipoyl-binding spans 24–106 (TYTVGITEHA…YAGGWIFKIK (83 aa)). Lysine 65 is modified (N6-lipoyllysine).

This sequence belongs to the GcvH family. In terms of assembly, the glycine cleavage system is composed of four proteins: P, T, L and H. It depends on (R)-lipoate as a cofactor.

In terms of biological role, the glycine cleavage system catalyzes the degradation of glycine. The H protein shuttles the methylamine group of glycine from the P protein to the T protein. The protein is Glycine cleavage system H protein of Escherichia coli O127:H6 (strain E2348/69 / EPEC).